A 172-amino-acid polypeptide reads, in one-letter code: Cytochrome c oxidase subunit 4 isoform 2, mitochondrial (172 aa).

Residues Met1 to Thr18 constitute a mitochondrion transit peptide. Residues Met1–Arg33 form a disordered region. Residues Leu16 to Arg33 are compositionally biased toward polar residues. At Gln19–Asn101 the chain is on the mitochondrial matrix side. The helical transmembrane segment at Glu102–Tyr127 threads the bilayer. At Val128–Lys172 the chain is on the mitochondrial intermembrane side.

This sequence belongs to the cytochrome c oxidase IV family. In terms of assembly, component of the cytochrome c oxidase (complex IV, CIV), a multisubunit enzyme composed of 14 subunits. The complex is composed of a catalytic core of 3 subunits MT-CO1, MT-CO2 and MT-CO3, encoded in the mitochondrial DNA, and 11 supernumerary subunits COX4I, COX5A, COX5B, COX6A, COX6B, COX6C, COX7A, COX7B, COX7C, COX8 and NDUFA4, which are encoded in the nuclear genome. The complex exists as a monomer or a dimer and forms supercomplexes (SCs) in the inner mitochondrial membrane with NADH-ubiquinone oxidoreductase (complex I, CI) and ubiquinol-cytochrome c oxidoreductase (cytochrome b-c1 complex, complex III, CIII), resulting in different assemblies (supercomplex SCI(1)III(2)IV(1) and megacomplex MCI(2)III(2)IV(2)). As to expression, highly expressed in lung.

Its subcellular location is the mitochondrion inner membrane. The protein operates within energy metabolism; oxidative phosphorylation. Its function is as follows. Component of the cytochrome c oxidase, the last enzyme in the mitochondrial electron transport chain which drives oxidative phosphorylation. The respiratory chain contains 3 multisubunit complexes succinate dehydrogenase (complex II, CII), ubiquinol-cytochrome c oxidoreductase (cytochrome b-c1 complex, complex III, CIII) and cytochrome c oxidase (complex IV, CIV), that cooperate to transfer electrons derived from NADH and succinate to molecular oxygen, creating an electrochemical gradient over the inner membrane that drives transmembrane transport and the ATP synthase. Cytochrome c oxidase is the component of the respiratory chain that catalyzes the reduction of oxygen to water. Electrons originating from reduced cytochrome c in the intermembrane space (IMS) are transferred via the dinuclear copper A center (CU(A)) of subunit 2 and heme A of subunit 1 to the active site in subunit 1, a binuclear center (BNC) formed by heme A3 and copper B (CU(B)). The BNC reduces molecular oxygen to 2 water molecules using 4 electrons from cytochrome c in the IMS and 4 protons from the mitochondrial matrix. This is Cytochrome c oxidase subunit 4 isoform 2, mitochondrial (Cox4i2) from Rattus norvegicus (Rat).